The following is a 31-amino-acid chain: Photosystem II reaction center protein T (31 aa).

Residues 3-23 (SFAYILILGLAIATLFFAIAF) traverse the membrane as a helical segment.

It belongs to the PsbT family. PSII is composed of 1 copy each of membrane proteins PsbA, PsbB, PsbC, PsbD, PsbE, PsbF, PsbH, PsbI, PsbJ, PsbK, PsbL, PsbM, PsbT, PsbX, PsbY, PsbZ, Psb30/Ycf12, peripheral proteins PsbO, CyanoQ (PsbQ), PsbU, PsbV and a large number of cofactors. It forms dimeric complexes.

It is found in the cellular thylakoid membrane. Found at the monomer-monomer interface of the photosystem II (PS II) dimer, plays a role in assembly and dimerization of PSII. PSII is a light-driven water plastoquinone oxidoreductase, using light energy to abstract electrons from H(2)O, generating a proton gradient subsequently used for ATP formation. This chain is Photosystem II reaction center protein T, found in Synechococcus sp. (strain CC9311).